A 244-amino-acid polypeptide reads, in one-letter code: Cytochrome c1 (244 aa).

Positions 1–19 are cleaved as a signal peptide; it reads MRKLILATFLLLAPTALLA. 3 residues coordinate heme c: Cys50, Cys53, and His54. Residues 220–240 traverse the membrane as a helical segment; it reads YVLLFLGFLFILAYLLKKEYW.

The main subunits of complex b-c1 are: cytochrome b, cytochrome c1 and the Rieske protein. Post-translationally, binds 1 heme c group covalently per subunit.

It is found in the cell membrane. In terms of biological role, component of the ubiquinol-cytochrome c reductase complex (complex III or cytochrome b-c1 complex), which is a respiratory chain that generates an electrochemical potential coupled to ATP synthesis. c1 functions as an electron donor to cytochrome c. The sequence is that of Cytochrome c1 (petC) from Allochromatium vinosum (strain ATCC 17899 / DSM 180 / NBRC 103801 / NCIMB 10441 / D) (Chromatium vinosum).